The primary structure comprises 86 residues: MSEEKNTRTVNGRVVSSKMDKTLTVLVERRVKHPLYGKFIRRSTKLHAHDEGNEGREGDWVSIQECRPLSKNKTWRLVKVLERAAS.

The protein belongs to the universal ribosomal protein uS17 family. Part of the 30S ribosomal subunit.

Its function is as follows. One of the primary rRNA binding proteins, it binds specifically to the 5'-end of 16S ribosomal RNA. The sequence is that of Small ribosomal subunit protein uS17 from Halorhodospira halophila (strain DSM 244 / SL1) (Ectothiorhodospira halophila (strain DSM 244 / SL1)).